A 250-amino-acid chain; its full sequence is MGQKVHPIGIRLGVVKRHNANWYANPKQYAEYLLKDLQVREFLTKNLKNAMVSNILIERPSGAAKVTISTARPGIVIGKKGEDIEKLQRELTNIMGVPAQVSINEIDRPDLDARLVAEAIASQLEKRVMFRRAMKRAVQNTMRAGAKGIKVEVSGRLGGAEIARTEWYREGRVPLHTLRADIDYATMRAETTYGTIGVKVWIFRGEILGGMKQVMNPAPAEERPAKRGRGRGEGQERRGRRGDRAADKGE.

Residues 39–107 (VREFLTKNLK…PAQVSINEID (69 aa)) form the KH type-2 domain. Residues 215–250 (MNPAPAEERPAKRGRGRGEGQERRGRRGDRAADKGE) are disordered. The segment covering 220 to 250 (AEERPAKRGRGRGEGQERRGRRGDRAADKGE) has biased composition (basic and acidic residues).

This sequence belongs to the universal ribosomal protein uS3 family. In terms of assembly, part of the 30S ribosomal subunit. Forms a tight complex with proteins S10 and S14.

In terms of biological role, binds the lower part of the 30S subunit head. Binds mRNA in the 70S ribosome, positioning it for translation. This chain is Small ribosomal subunit protein uS3, found in Acinetobacter baumannii (strain AB0057).